The sequence spans 192 residues: GTP cyclohydrolase-2 (192 aa).

47-51 (RIHSE) contributes to the GTP binding site. Residues C52, C63, and C65 each contribute to the Zn(2+) site. GTP contacts are provided by residues Q68, 90–92 (EGR), and T112. D124 functions as the Proton acceptor in the catalytic mechanism. The active-site Nucleophile is R126. Positions 147 and 152 each coordinate GTP.

Belongs to the GTP cyclohydrolase II family. Zn(2+) serves as cofactor.

The catalysed reaction is GTP + 4 H2O = 2,5-diamino-6-hydroxy-4-(5-phosphoribosylamino)-pyrimidine + formate + 2 phosphate + 3 H(+). It participates in cofactor biosynthesis; riboflavin biosynthesis; 5-amino-6-(D-ribitylamino)uracil from GTP: step 1/4. Catalyzes the conversion of GTP to 2,5-diamino-6-ribosylamino-4(3H)-pyrimidinone 5'-phosphate (DARP), formate and pyrophosphate. The sequence is that of GTP cyclohydrolase-2 from Picrophilus torridus (strain ATCC 700027 / DSM 9790 / JCM 10055 / NBRC 100828 / KAW 2/3).